The primary structure comprises 259 residues: uncharacterized protein (259 aa).

The 123-residue stretch at 51–173 (GKTHAKIVAN…IAVADGTDMT (123 aa)) folds into the HD domain.

This is an uncharacterized protein from Methanocaldococcus jannaschii (strain ATCC 43067 / DSM 2661 / JAL-1 / JCM 10045 / NBRC 100440) (Methanococcus jannaschii).